The primary structure comprises 271 residues: 2-aminophenol 1,6-dioxygenase subunit alpha (271 aa).

The protein belongs to the LigB/MhpB extradiol dioxygenase family. In terms of assembly, the APD complex is a heterotetramer of 2 alpha (CnbCa) and 2 beta (CnbCb) subunits.

The protein operates within xenobiotic degradation; nitrobenzene degradation. Its pathway is xenobiotic degradation; 4-chloronitrobenzene degradation. Component of the 2-aminophenol 1,6-dioxygenase (APD) complex that catalyzes the ring fission of 2-aminophenol to produce 2-aminomuconic semialdehyde. CnbCa may have a role in the stability of the complex. The complex is also active on other substrates such as 2-amino-5-chlorophenol (68% activity), protocatechuate (33% activity) and catechol (5% activity). Both 2-aminophenol and 2-amino-5-cholorophenol are likely native substrates for this dioxygenase which is involved in the reductive degradation pathway of both nitrobenzene (NB) and 4-chloronitrobenzene (4-CNB), allowing C.testosteroni strain CNB-1 to grow on these compounds as sole source of carbon, nitrogen, and energy. The polypeptide is 2-aminophenol 1,6-dioxygenase subunit alpha (Comamonas testosteroni (Pseudomonas testosteroni)).